A 692-amino-acid polypeptide reads, in one-letter code: Phenoloxidase subunit 2 (692 aa).

A propeptide spanning residues 1–97 (MTDRVKSLQL…PRHQEMATEV (97 aa)) is cleaved from the precursor. Positions 213, 217, and 243 each coordinate Cu cation. Residues N256, N295, and N309 are each glycosylated (N-linked (GlcNAc...) asparagine). Residue E351 is the Proton acceptor of the active site. H366, H370, and H406 together coordinate Cu cation. N494 is a glycosylation site (N-linked (GlcNAc...) asparagine). 2 disulfides stabilise this stretch: C583-C628 and C585-C635.

This sequence belongs to the tyrosinase family. In terms of assembly, heterodimer. Cu(2+) serves as cofactor.

The protein resides in the secreted. The enzyme catalyses L-tyrosine + O2 = L-dopaquinone + H2O. The catalysed reaction is 2 L-dopa + O2 = 2 L-dopaquinone + 2 H2O. Functionally, copper-containing oxidase that functions in the formation of pigments such as melanins and other polyphenolic compounds. Catalyzes the rate-limiting conversions of tyrosine to DOPA, DOPA to DOPA-quinone and possibly 5,6 dihydroxyindole to indole-5'6 quinone. Binds to the surface of hemocytes and is involved in hemocyte melanization. Binds the A.niger cell wall component alpha-1,3-glucan, a fungal pathogen-associated molecular pattern (PAMP) that activates the host immune response. The sequence is that of Phenoloxidase subunit 2 from Galleria mellonella (Greater wax moth).